Consider the following 434-residue polypeptide: Probable carboxypeptidase BDBG_01803 (434 aa).

Residues 1-20 (MKLSHLAAALSAQLVAPVAA) form the signal peptide. Residues asparagine 35, asparagine 136, and asparagine 150 are each glycosylated (N-linked (GlcNAc...) asparagine). Aspartate 160 is a binding site for Zn(2+). Glutamate 192 functions as the Proton acceptor in the catalytic mechanism. Glutamate 193 contacts Zn(2+). N-linked (GlcNAc...) asparagine glycosylation is present at asparagine 343.

The protein belongs to the peptidase M20A family. The cofactor is Zn(2+).

The protein localises to the secreted. This is Probable carboxypeptidase BDBG_01803 from Blastomyces gilchristii (strain SLH14081) (Blastomyces dermatitidis).